Consider the following 88-residue polypeptide: LYR motif-containing protein 2 (88 aa).

The N-terminal 19 residues, 1 to 19, are a transit peptide targeting the mitochondrion; the sequence is MAASRLPPATLTLKQFVRR.

Belongs to the complex I LYR family.

The protein localises to the mitochondrion. Functionally, involved in efficient integration of the N-module into mitochondrial respiratory chain complex I. The sequence is that of LYR motif-containing protein 2 (LYRM2) from Pongo abelii (Sumatran orangutan).